Reading from the N-terminus, the 98-residue chain is NADH-ubiquinone oxidoreductase chain 4L (98 aa).

Transmembrane regions (helical) follow at residues 1–21 (MSLIHINILMAFTMSLVGLLM), 29–49 (ALLCLEGMVLSLFILMTLTIL), and 61–81 (IILLVFAACEAAIGLALLVMV).

This sequence belongs to the complex I subunit 4L family. In terms of assembly, core subunit of respiratory chain NADH dehydrogenase (Complex I) which is composed of 45 different subunits.

It localises to the mitochondrion inner membrane. The catalysed reaction is a ubiquinone + NADH + 5 H(+)(in) = a ubiquinol + NAD(+) + 4 H(+)(out). In terms of biological role, core subunit of the mitochondrial membrane respiratory chain NADH dehydrogenase (Complex I) which catalyzes electron transfer from NADH through the respiratory chain, using ubiquinone as an electron acceptor. Part of the enzyme membrane arm which is embedded in the lipid bilayer and involved in proton translocation. The polypeptide is NADH-ubiquinone oxidoreductase chain 4L (MT-ND4L) (Phocoena phocoena (Harbor porpoise)).